A 151-amino-acid chain; its full sequence is Deoxyuridine 5'-triphosphate nucleotidohydrolase (151 aa).

Substrate-binding positions include 71–73 (RSG), Asn-84, and 88–90 (TID).

The protein belongs to the dUTPase family. The cofactor is Mg(2+).

It carries out the reaction dUTP + H2O = dUMP + diphosphate + H(+). Its pathway is pyrimidine metabolism; dUMP biosynthesis; dUMP from dCTP (dUTP route): step 2/2. This enzyme is involved in nucleotide metabolism: it produces dUMP, the immediate precursor of thymidine nucleotides and it decreases the intracellular concentration of dUTP so that uracil cannot be incorporated into DNA. This Gluconobacter oxydans (strain 621H) (Gluconobacter suboxydans) protein is Deoxyuridine 5'-triphosphate nucleotidohydrolase.